A 243-amino-acid polypeptide reads, in one-letter code: Proteasome subunit beta (243 aa).

Positions 1–49 are cleaved as a propeptide — removed in mature form; by autocatalysis; sequence MRTPTGDLSDGPAEELGRDQPVFGPEIGEFEHSERRAAQADGEGEMKTG. Residues 1-50 form a disordered region; that stretch reads MRTPTGDLSDGPAEELGRDQPVFGPEIGEFEHSERRAAQADGEGEMKTGT. Basic and acidic residues predominate over residues 29 to 38; the sequence is EFEHSERRAA. The active-site Nucleophile is Thr-50.

This sequence belongs to the peptidase T1B family. In terms of assembly, the 20S proteasome core is composed of 14 alpha and 14 beta subunits that assemble into four stacked heptameric rings, resulting in a barrel-shaped structure. The two inner rings, each composed of seven catalytic beta subunits, are sandwiched by two outer rings, each composed of seven alpha subunits. The catalytic chamber with the active sites is on the inside of the barrel. Has a gated structure, the ends of the cylinder being occluded by the N-termini of the alpha-subunits. Is capped at one or both ends by the proteasome regulatory ATPase, PAN.

It localises to the cytoplasm. It carries out the reaction Cleavage of peptide bonds with very broad specificity.. The formation of the proteasomal ATPase PAN-20S proteasome complex, via the docking of the C-termini of PAN into the intersubunit pockets in the alpha-rings, triggers opening of the gate for substrate entry. Interconversion between the open-gate and close-gate conformations leads to a dynamic regulation of the 20S proteasome proteolysis activity. In terms of biological role, component of the proteasome core, a large protease complex with broad specificity involved in protein degradation. This Halorubrum lacusprofundi (strain ATCC 49239 / DSM 5036 / JCM 8891 / ACAM 34) protein is Proteasome subunit beta.